A 219-amino-acid chain; its full sequence is DAN domain family member 5 (219 aa).

Residues 1-19 (MLLFRAASLLPLLCFTVGA) form the signal peptide. Cystine bridges form between C118–C165, C132–C179, C142–C195, and C146–C197. The 81-residue stretch at 118 to 198 (CHALPFIQNV…VELVEECECE (81 aa)) folds into the CTCK domain.

It belongs to the DAN family. In terms of assembly, interacts with nr1-a.

It is found in the secreted. Its function is as follows. Plays an important role in regulating the left-right axis by blocking a tgfb1 cascade in the right posterior paraxial mesoderm. Functions as an inhibitor of bmp, tgfb1, nodal, activin and wnt signaling in the ectoderm. May inhibit mesodermal signals, probably through an inhibition of nodal/activin pathways. Seems to regulates cell fate specification and competence before the onset of neural induction. Expression in the entire ectodermal region prior to gastrulation might act to prevent fate specification in the ectoderm and ensure the maintenance of the stem-cell-like properties exhibited by ectodermal cells. The chain is DAN domain family member 5 (dand5) from Xenopus tropicalis (Western clawed frog).